We begin with the raw amino-acid sequence, 1107 residues long: MSQFWGEFPEKVIQTFQHLQVALIGDIKKCALSSPLFPELSKLDAHSQHHLLASFELPRFGGVTPGVMEQLRDAESELAEAKQRLLRERLHAVANRQNIPYLGDCMYYDAPGISQEELLQAAFLEAPTPAWEHERIRPLWPKDEWFRDARQGPYLEDYGNIPLGDLDTLCLAFDALVEEHWMPIYLLISTFSMFQQYGTQPLLLECAQSAGSLIPACMMTDHHLEPTGDRQADKEARQDYADSQDSIQSMGDFWKEFYTKDSGKKIPDSHKSRLANDPNKVGFTKSALFHKQPLSHSLAQTWANFRGTQDKADLVKVTMDMNIEKYTVRLPDAVRTTAGPLYIEWINLPRMSENSARKLAEVGWNNADICGVDLAVKSHIAVGTPVRVIISLVDGACSDMPTATMCAFEVNLASQNNRSLNLPLLSLPFSRLLADLHDFQNRVKIACQFRDPEGFNVGTPMLSFSSLEFSELKQTAFERNSLLRDSWSEIEKRACHGGGRCVASQGIVQTWEKEVNPPLKEYAPLVLPPVPQPKRNFIDQQTGEVVQSFMQKSRSMRFKSPSDLWSRPSVDGGSTSTQPPSKGSLRCENVPGCAYEVDPLHLLYYESVDVPKDTLAGTLLARIDVRAKAAIFDSAVWRQWVRDGCLKPKIKMRITAATSCFSGIVLGACFDAYRRIPAATKTGITASLVTGLPNTVWATRDTSEVEWDIDLAAVCGHTFFALEDTFGYMDFLIYVLRGNEITAVADWSIYVSFHVDWTQESMLATLIPTFVWPPKPTDISLLKEVWGPYRFTLDGTEAKESFAIMPGTAILHGQQIVRTFPRVVAAHFRSWTGKVRMSIQEVSSIFLTGTYMVGVSWNATADLADIVTRKHWIVKSNEIFEVDLYCPYGENPTFTGQANGKPFIIVHKLGGIVGPKDSVGTFGFMIHIHGLTGVYKNPTLHSGDRSVGSAWFRINNIADDNLVFNIPGRIEDIIAAAGKYDVTNYVNPTSLLFSVTGLHGGIIRLHITWCPNTTLGESKGTLKYMQYLYHTATENFFGDQATRGIIDQDGFTIDIACGDFFGATRVGLPGEVERLGIYSSNAKSIAEIRVSFEVLSMNFYGSTIKVT.

The interval 553–584 is disordered; the sequence is SRSMRFKSPSDLWSRPSVDGGSTSTQPPSKGS. Over residues 572-581 the composition is skewed to polar residues; sequence GGSTSTQPPS.

It belongs to the nepoviruses RNA2 polyprotein family. In terms of processing, specific enzymatic cleavages in vivo by the P1 encoded 3C-like protease yield mature proteins.

It localises to the host cell junction. Its subcellular location is the host plasmodesma. The protein resides in the host cytoplasm. It is found in the host nucleus. The protein localises to the virion. In terms of biological role, implicated in RNA2 replication. Could also be required for nematode transmission of the virus. Functionally, transports viral genome to neighboring plant cells directly through plasmosdesmata, without any budding. The movement protein allows efficient cell to cell propagation, by bypassing the host cell wall barrier. Acts by forming a tubular structure at the host plasmodesmata, enlarging it enough to allow free passage of virion capsids. The protein is RNA2 polyprotein of Raspberry ringspot virus (strain S) (RpRSV).